The primary structure comprises 148 residues: Small ribosomal subunit protein eS12B (148 aa).

Belongs to the eukaryotic ribosomal protein eS12 family. Component of the small ribosomal subunit (SSU). Mature yeast ribosomes consist of a small (40S) and a large (60S) subunit. The 40S small subunit contains 1 molecule of ribosomal RNA (18S rRNA) and at least 33 different proteins. The large 60S subunit contains 3 rRNA molecules (25S, 5.8S and 5S rRNA) and at least 46 different proteins.

It localises to the cytoplasm. In terms of biological role, component of the ribosome, a large ribonucleoprotein complex responsible for the synthesis of proteins in the cell. The small ribosomal subunit (SSU) binds messenger RNAs (mRNAs) and translates the encoded message by selecting cognate aminoacyl-transfer RNA (tRNA) molecules. The large subunit (LSU) contains the ribosomal catalytic site termed the peptidyl transferase center (PTC), which catalyzes the formation of peptide bonds, thereby polymerizing the amino acids delivered by tRNAs into a polypeptide chain. The nascent polypeptides leave the ribosome through a tunnel in the LSU and interact with protein factors that function in enzymatic processing, targeting, and the membrane insertion of nascent chains at the exit of the ribosomal tunnel. This Schizosaccharomyces pombe (strain 972 / ATCC 24843) (Fission yeast) protein is Small ribosomal subunit protein eS12B (rps1202).